A 333-amino-acid polypeptide reads, in one-letter code: Phosphate acyltransferase (333 aa).

Belongs to the PlsX family. In terms of assembly, homodimer. Probably interacts with PlsY.

It localises to the cytoplasm. The catalysed reaction is a fatty acyl-[ACP] + phosphate = an acyl phosphate + holo-[ACP]. Its pathway is lipid metabolism; phospholipid metabolism. Its function is as follows. Catalyzes the reversible formation of acyl-phosphate (acyl-PO(4)) from acyl-[acyl-carrier-protein] (acyl-ACP). This enzyme utilizes acyl-ACP as fatty acyl donor, but not acyl-CoA. In Cellvibrio japonicus (strain Ueda107) (Pseudomonas fluorescens subsp. cellulosa), this protein is Phosphate acyltransferase.